We begin with the raw amino-acid sequence, 130 residues long: Large ribosomal subunit protein bL12 (130 aa).

Positions 94–114 (MTEGLPKTVKEKTSKSDAEDT) are disordered.

The protein belongs to the bacterial ribosomal protein bL12 family. As to quaternary structure, homodimer. Part of the ribosomal stalk of the 50S ribosomal subunit. Forms a multimeric L10(L12)X complex, where L10 forms an elongated spine to which 2 to 4 L12 dimers bind in a sequential fashion. Binds GTP-bound translation factors.

In terms of biological role, forms part of the ribosomal stalk which helps the ribosome interact with GTP-bound translation factors. Is thus essential for accurate translation. This chain is Large ribosomal subunit protein bL12, found in Chlamydia caviae (strain ATCC VR-813 / DSM 19441 / 03DC25 / GPIC) (Chlamydophila caviae).